A 298-amino-acid chain; its full sequence is Homoserine kinase (298 aa).

An ATP-binding site is contributed by 92-102 (PLARGLGSSAT).

It belongs to the GHMP kinase family. Homoserine kinase subfamily.

It localises to the cytoplasm. It catalyses the reaction L-homoserine + ATP = O-phospho-L-homoserine + ADP + H(+). The protein operates within amino-acid biosynthesis; L-threonine biosynthesis; L-threonine from L-aspartate: step 4/5. Functionally, catalyzes the ATP-dependent phosphorylation of L-homoserine to L-homoserine phosphate. The polypeptide is Homoserine kinase (thrB) (Nostoc sp. (strain PCC 7120 / SAG 25.82 / UTEX 2576)).